The chain runs to 203 residues: RNA annealing protein YRA2 (203 aa).

Met-1 carries the N-acetylmethionine modification. 2 disordered regions span residues Met-1 to Pro-60 and Gln-137 to Gly-203. The segment covering Asn-11–His-20 has biased composition (polar residues). Over residues Ser-47–Pro-60 the composition is skewed to basic and acidic residues. The RRM domain maps to Lys-64–Pro-138. The segment covering Gln-139–Gln-153 has biased composition (basic residues). Basic and acidic residues predominate over residues Thr-154–Gly-164. Residues Ser-165 to Gly-180 show a composition bias toward basic residues.

This sequence belongs to the YRA1 family. As to quaternary structure, associates with mRNPs. Interacts with YRA1.

The protein localises to the nucleus. In terms of biological role, involved in export of poly(A) mRNAs from the nucleus. Recruited to the coding sequences as well as poly-A sites of active genes. This Saccharomyces cerevisiae (strain YJM789) (Baker's yeast) protein is RNA annealing protein YRA2 (YRA2).